The following is a 190-amino-acid chain: Threonylcarbamoyl-AMP synthase (190 aa).

The region spanning 7–190 is the YrdC-like domain; that stretch reads TGSIAAAVDL…ALTGELFRQG (184 aa).

Belongs to the SUA5 family. TsaC subfamily.

The protein resides in the cytoplasm. The enzyme catalyses L-threonine + hydrogencarbonate + ATP = L-threonylcarbamoyladenylate + diphosphate + H2O. In terms of biological role, required for the formation of a threonylcarbamoyl group on adenosine at position 37 (t(6)A37) in tRNAs that read codons beginning with adenine. Catalyzes the conversion of L-threonine, HCO(3)(-)/CO(2) and ATP to give threonylcarbamoyl-AMP (TC-AMP) as the acyladenylate intermediate, with the release of diphosphate. The chain is Threonylcarbamoyl-AMP synthase from Salmonella choleraesuis (strain SC-B67).